The chain runs to 270 residues: GTP cyclohydrolase FolE2 (270 aa).

Belongs to the GTP cyclohydrolase IV family.

It catalyses the reaction GTP + H2O = 7,8-dihydroneopterin 3'-triphosphate + formate + H(+). It functions in the pathway cofactor biosynthesis; 7,8-dihydroneopterin triphosphate biosynthesis; 7,8-dihydroneopterin triphosphate from GTP: step 1/1. Converts GTP to 7,8-dihydroneopterin triphosphate. The sequence is that of GTP cyclohydrolase FolE2 from Cupriavidus pinatubonensis (strain JMP 134 / LMG 1197) (Cupriavidus necator (strain JMP 134)).